Consider the following 62-residue polypeptide: Fungus-induced protein 1 (62 aa).

The signal sequence occupies residues 1–22 (MSQNLFQILLIFAILAALQVQG).

The polypeptide is Fungus-induced protein 1 (Caenorhabditis briggsae).